The following is a 168-amino-acid chain: MLVYQDLLTGDELLSDSFPYKEIHNGILWEVEGKWVVQGAVDVDIGANPSAEGADEDEGVDDQAVKVVDIVDTFRLQEQPAFDKKQFVTYMKRFIKLLTPKLDEEKQESFKKNIEGATKFLLSKLSDLQFFVGESMHDDGSLVFAYYRGGATDPTFLYFAYALKEVKC.

Residues 1–168 (MLVYQDLLTG…FAYALKEVKC (168 aa)) enclose the TCTP domain.

Belongs to the TCTP family.

The protein localises to the cytoplasm. In terms of biological role, involved in calcium binding and microtubule stabilization. This Hevea brasiliensis (Para rubber tree) protein is Translationally-controlled tumor protein homolog (TCTP).